A 554-amino-acid chain; its full sequence is Glucose-6-phosphate isomerase (554 aa).

Glutamate 358 (proton donor) is an active-site residue. Residues histidine 389 and lysine 515 contribute to the active site. A compositionally biased stretch (polar residues) spans 527 to 540 (SDGSPQRQSDSSTD). The tract at residues 527–554 (SDGSPQRQSDSSTDALVRRYRTQRGRTG) is disordered. The span at 544 to 554 (RRYRTQRGRTG) shows a compositional bias: basic residues.

It belongs to the GPI family.

The protein localises to the cytoplasm. It carries out the reaction alpha-D-glucose 6-phosphate = beta-D-fructose 6-phosphate. The protein operates within carbohydrate biosynthesis; gluconeogenesis. It functions in the pathway carbohydrate degradation; glycolysis; D-glyceraldehyde 3-phosphate and glycerone phosphate from D-glucose: step 2/4. Functionally, catalyzes the reversible isomerization of glucose-6-phosphate to fructose-6-phosphate. This Mycobacterium ulcerans (strain Agy99) protein is Glucose-6-phosphate isomerase.